We begin with the raw amino-acid sequence, 496 residues long: L-arabinose isomerase (496 aa).

Residues E302, E329, H346, and H445 each contribute to the Mn(2+) site.

It belongs to the arabinose isomerase family. It depends on Mn(2+) as a cofactor.

The catalysed reaction is beta-L-arabinopyranose = L-ribulose. Its pathway is carbohydrate degradation; L-arabinose degradation via L-ribulose; D-xylulose 5-phosphate from L-arabinose (bacterial route): step 1/3. Its function is as follows. Catalyzes the conversion of L-arabinose to L-ribulose. This chain is L-arabinose isomerase, found in Thermotoga sp. (strain RQ2).